A 202-amino-acid chain; its full sequence is MNYPSNPNPSSTDFTEFFKFDDFDDTFEKIMEEIGREDHSSSPTLSWSSSEKLVAAEITSPLQTSLATSPMSFEIGDKDEIKKRKRHKEDPIIHVFKTKSSIDEKVALDDGYKWRKYGKKPITGSPFPRHYHKCSSPDCNVKKKIERDTNNPDYILTTYEGRHNHPSPSVVYCDSDDFDLNSLNNWSFQTANTYSFSHSAPY.

Residues 103–168 constitute a DNA-binding region (WRKY); the sequence is DEKVALDDGY…YEGRHNHPSP (66 aa).

Belongs to the WRKY group II-c family.

Its subcellular location is the nucleus. Functionally, transcription factor. Interacts specifically with the W box (5'-(T)TGAC[CT]-3'), a frequently occurring elicitor-responsive cis-acting element. The chain is Probable WRKY transcription factor 59 (WRKY59) from Arabidopsis thaliana (Mouse-ear cress).